Reading from the N-terminus, the 294-residue chain is Ribosomal RNA small subunit methyltransferase A (294 aa).

Residues asparagine 31, leucine 33, glycine 58, glutamate 79, aspartate 104, and asparagine 129 each contribute to the S-adenosyl-L-methionine site.

Belongs to the class I-like SAM-binding methyltransferase superfamily. rRNA adenine N(6)-methyltransferase family. RsmA subfamily.

The protein localises to the cytoplasm. The catalysed reaction is adenosine(1518)/adenosine(1519) in 16S rRNA + 4 S-adenosyl-L-methionine = N(6)-dimethyladenosine(1518)/N(6)-dimethyladenosine(1519) in 16S rRNA + 4 S-adenosyl-L-homocysteine + 4 H(+). Functionally, specifically dimethylates two adjacent adenosines (A1518 and A1519) in the loop of a conserved hairpin near the 3'-end of 16S rRNA in the 30S particle. May play a critical role in biogenesis of 30S subunits. This chain is Ribosomal RNA small subunit methyltransferase A, found in Oceanobacillus iheyensis (strain DSM 14371 / CIP 107618 / JCM 11309 / KCTC 3954 / HTE831).